The following is a 386-amino-acid chain: Succinate--CoA ligase [ADP-forming] subunit beta (386 aa).

An ATP-grasp domain is found at 9 to 244 (KEILRKYGVP…HDEEDPLETR (236 aa)). Residues lysine 46, 53 to 55 (GRG), glutamate 99, cysteine 102, and glutamate 107 contribute to the ATP site. 2 residues coordinate Mg(2+): asparagine 199 and aspartate 213. Residues asparagine 264 and 321–323 (GIM) contribute to the substrate site.

This sequence belongs to the succinate/malate CoA ligase beta subunit family. In terms of assembly, heterotetramer of two alpha and two beta subunits. Mg(2+) is required as a cofactor.

The catalysed reaction is succinate + ATP + CoA = succinyl-CoA + ADP + phosphate. It catalyses the reaction GTP + succinate + CoA = succinyl-CoA + GDP + phosphate. The protein operates within carbohydrate metabolism; tricarboxylic acid cycle; succinate from succinyl-CoA (ligase route): step 1/1. Functionally, succinyl-CoA synthetase functions in the citric acid cycle (TCA), coupling the hydrolysis of succinyl-CoA to the synthesis of either ATP or GTP and thus represents the only step of substrate-level phosphorylation in the TCA. The beta subunit provides nucleotide specificity of the enzyme and binds the substrate succinate, while the binding sites for coenzyme A and phosphate are found in the alpha subunit. This chain is Succinate--CoA ligase [ADP-forming] subunit beta, found in Rickettsia conorii (strain ATCC VR-613 / Malish 7).